The chain runs to 342 residues: Isopentenyl-diphosphate delta-isomerase (342 aa).

11 to 12 (RK) provides a ligand contact to substrate. FMN is bound by residues S68, 69 to 71 (SMT), S99, and N128. 99 to 101 (SQR) is a binding site for substrate. Q162 is a binding site for substrate. Position 163 (E163) interacts with Mg(2+). FMN is bound by residues K194, S219, T224, 275-277 (GVR), and 296-297 (AK).

This sequence belongs to the IPP isomerase type 2 family. Homooctamer. Dimer of tetramers. It depends on FMN as a cofactor. The cofactor is NADPH. Requires Mg(2+) as cofactor.

It localises to the cytoplasm. The enzyme catalyses isopentenyl diphosphate = dimethylallyl diphosphate. Functionally, involved in the biosynthesis of isoprenoids. Catalyzes the 1,3-allylic rearrangement of the homoallylic substrate isopentenyl (IPP) to its allylic isomer, dimethylallyl diphosphate (DMAPP). This chain is Isopentenyl-diphosphate delta-isomerase, found in Legionella pneumophila (strain Lens).